The following is a 467-amino-acid chain: ATP synthase subunit beta (467 aa).

150-157 (GGAGVGKT) is an ATP binding site.

It belongs to the ATPase alpha/beta chains family. F-type ATPases have 2 components, CF(1) - the catalytic core - and CF(0) - the membrane proton channel. CF(1) has five subunits: alpha(3), beta(3), gamma(1), delta(1), epsilon(1). CF(0) has three main subunits: a(1), b(2) and c(9-12). The alpha and beta chains form an alternating ring which encloses part of the gamma chain. CF(1) is attached to CF(0) by a central stalk formed by the gamma and epsilon chains, while a peripheral stalk is formed by the delta and b chains.

It localises to the cell inner membrane. It catalyses the reaction ATP + H2O + 4 H(+)(in) = ADP + phosphate + 5 H(+)(out). In terms of biological role, produces ATP from ADP in the presence of a proton gradient across the membrane. The catalytic sites are hosted primarily by the beta subunits. This chain is ATP synthase subunit beta, found in Polaromonas sp. (strain JS666 / ATCC BAA-500).